The primary structure comprises 348 residues: Peptidyl-Lys metalloendopeptidase (348 aa).

The signal sequence occupies residues 1–18 (MFSSVMVALVSLAVAVSA). A propeptide spanning residues 19–181 (NPGLSLKVSG…RATPTLTRPV (163 aa)) is cleaved from the precursor. Disulfide bonds link C186–C256 and C258–C278. The O-linked (Man) threonine; partial glycan is linked to T223. H298 is a binding site for Zn(2+). The active site involves E299. The Zn(2+) site is built by H302 and D311.

Zn(2+) is required as a cofactor.

It localises to the secreted. It catalyses the reaction Preferential cleavage in proteins: -Xaa-|-Lys- (in which Xaa may be Pro).. Inhibited by chelating agents such as EDTA and 1,10-phenanthroline. This Grifola frondosa (Maitake) protein is Peptidyl-Lys metalloendopeptidase (MEP).